The primary structure comprises 366 residues: N-acetyl-L-citrulline deacetylase (366 aa).

Co(2+) is bound by residues His-72 and Asp-103. Glu-130 (proton donor/acceptor) is an active-site residue. Residue Glu-155 coordinates Co(2+).

It belongs to the peptidase M20A family. N-acetylcitrulline deacetylase subfamily. Forms homodimers in the crystal, but higher order oligomers may form in solution. Co(2+) serves as cofactor.

It catalyses the reaction N(2)-acetyl-L-citrulline + H2O = L-citrulline + acetate. The catalysed reaction is N(2)-acetyl-L-ornithine + H2O = L-ornithine + acetate. It functions in the pathway amino-acid biosynthesis; L-arginine biosynthesis. Functionally, catalyzes the deacetylation of N-acetyl-L-citrulline to produce L-citrulline. This is a step in an alternative arginine biosynthesis pathway. Is also able to catalyze the deacetylation of N-acetylornithine in vitro, with almost equal velocity. However, this reaction may be not relevant in vivo since Xanthomonas does not possess the canonical argF gene and cannot convert ornithine to citrulline via ArgF'. This chain is N-acetyl-L-citrulline deacetylase, found in Xanthomonas campestris pv. campestris (strain ATCC 33913 / DSM 3586 / NCPPB 528 / LMG 568 / P 25).